The chain runs to 497 residues: Ectonucleoside triphosphate diphosphohydrolase 8 (497 aa).

The Cytoplasmic portion of the chain corresponds to 1–8 (MGLSWKER). A helical membrane pass occupies residues 9–29 (VFMALLGVAAASGLTMLVLIL). The Extracellular portion of the chain corresponds to 30 to 473 (VKAINVLLPA…AQSYSIWTAG (444 aa)). Residues cysteine 78 and cysteine 102 are joined by a disulfide bond. Glutamate 168 acts as the Proton acceptor in catalysis. Cysteines 245 and 294 form a disulfide. Asparagine 306 carries N-linked (GlcNAc...) asparagine glycosylation. A disulfide bridge links cysteine 331 with cysteine 337. N-linked (GlcNAc...) asparagine glycosylation occurs at asparagine 365. Cysteine 383 and cysteine 405 form a disulfide bridge. Residues 474–494 (VVFAVLTLVAILGAAAIQIFW) form a helical membrane-spanning segment. Topologically, residues 495-497 (TQD) are cytoplasmic.

Belongs to the GDA1/CD39 NTPase family. Ca(2+) is required as a cofactor. Mg(2+) serves as cofactor. N-glycosylated. In terms of tissue distribution, expressed in liver, jejunum and kidney.

Its subcellular location is the cell membrane. The catalysed reaction is a ribonucleoside 5'-triphosphate + 2 H2O = a ribonucleoside 5'-phosphate + 2 phosphate + 2 H(+). In terms of biological role, canalicular ectonucleoside NTPDase responsible for the main hepatic NTPDase activity. Ectonucleoside NTPDases catalyze the hydrolysis of gamma- and beta-phosphate residues of nucleotides, playing a central role in concentration of extracellular nucleotides. Has activity toward ATP, ADP, UTP and UDP, but not toward AMP. The polypeptide is Ectonucleoside triphosphate diphosphohydrolase 8 (Entpd8) (Mus musculus (Mouse)).